The sequence spans 657 residues: MADTSGEVAAVPASGAANGLSNGAGATPAQPNNPLSRKLHKILETRLENDKEMLEALKALSAFFVENSLRTRRNLRGDIERRSLAINEEFVSIFKDVKEELESINEDVQAMSSCCQDMTSRLQAAKEQTQDLIVKTTKLQAENQRLEIRAQVADAFLSKFQLTSDEMTLLRGTRGGPVTEDFFKALGRVKQIHNDVKVLLRTNQQTAGLEIMEQMALLQETAYERLYRWAQSECRALTQESCDVSAVLTQAMEALQDRPVLYKYTLDEFGTARRSTVVRGFIDALTRGGPGGTPRPIEMHSHDPLRYVGDMLAWLHQATASEKEHLEALLKHVTAQGVKENIQEVVGHITEGVCRPLKVRIEQVILAEPGAVLLYKISNLLKFYHHTISGIVGNSAATLLTTIEEMHLLSKKIFFSSLSLHANKLMDKIELPPPDLGPSSALSQTLTLLRDVLASHDSSVVPLDARQADFVQVLSCVLDPLLQMCTVSASNLGTADMATFMVNSLYMMKTTLALFEFTDRRLEMLQFQIEAHLDTLINEQASYVLTRVGLSYIYNTIQQHRPDQGSLASMPNLDSVALKAAMAQFDRYLSAPDHLLMPQLNSLLSATVKEQIIKQSTELVCRAYGEVHAAVMNPVNAYKDPESILHRSPEQVKTLLS.

Positions serine 14–alanine 26 are enriched in low complexity. The interval serine 14–serine 36 is disordered.

Belongs to the COG6 family. In terms of assembly, component of the conserved oligomeric Golgi complex which is composed of eight different subunits and is required for normal Golgi morphology and localization.

It is found in the golgi apparatus membrane. In terms of biological role, required for normal Golgi function. The chain is Conserved oligomeric Golgi complex subunit 6 (Cog6) from Rattus norvegicus (Rat).